The following is a 228-amino-acid chain: Ribulose-phosphate 3-epimerase-like protein 1 (228 aa).

A substrate-binding site is contributed by serine 10. The a divalent metal cation site is built by histidine 35, aspartate 37, and histidine 70. The active-site Proton acceptor is the aspartate 37. Substrate contacts are provided by residues histidine 70, 146–149, 175–177, and 197–198; these read GFGE, DGG, and GS. An a divalent metal cation-binding site is contributed by aspartate 175. The active-site Proton donor is the aspartate 175.

This sequence belongs to the ribulose-phosphate 3-epimerase family. Homodimer. Fe(2+) serves as cofactor. The cofactor is Mn(2+). Zn(2+) is required as a cofactor. It depends on Co(2+) as a cofactor.

The catalysed reaction is D-ribulose 5-phosphate = D-xylulose 5-phosphate. It functions in the pathway carbohydrate degradation. Catalyzes the reversible epimerization of D-ribulose 5-phosphate to D-xylulose 5-phosphate. This is Ribulose-phosphate 3-epimerase-like protein 1 (RPEL1) from Homo sapiens (Human).